A 128-amino-acid chain; its full sequence is Glycine cleavage system H protein (128 aa).

The Lipoyl-binding domain maps to 25–107 (IITVGITHHA…YGAGWFFKLK (83 aa)). Lys66 is subject to N6-lipoyllysine.

It belongs to the GcvH family. The glycine cleavage system is composed of four proteins: P, T, L and H. The cofactor is (R)-lipoate.

In terms of biological role, the glycine cleavage system catalyzes the degradation of glycine. The H protein shuttles the methylamine group of glycine from the P protein to the T protein. The polypeptide is Glycine cleavage system H protein (Neisseria meningitidis serogroup A / serotype 4A (strain DSM 15465 / Z2491)).